The sequence spans 489 residues: 3-octaprenyl-4-hydroxybenzoate carboxy-lyase (489 aa).

Residue N172 coordinates Mn(2+). Prenylated FMN is bound by residues 175–177 (IYR), 189–191 (RWL), and 194–195 (RG). E238 contributes to the Mn(2+) binding site. Catalysis depends on D287, which acts as the Proton donor.

It belongs to the UbiD family. Homohexamer. Prenylated FMN serves as cofactor. Mn(2+) is required as a cofactor.

The protein localises to the cell membrane. It catalyses the reaction a 4-hydroxy-3-(all-trans-polyprenyl)benzoate + H(+) = a 2-(all-trans-polyprenyl)phenol + CO2. It participates in cofactor biosynthesis; ubiquinone biosynthesis. Catalyzes the decarboxylation of 3-octaprenyl-4-hydroxy benzoate to 2-octaprenylphenol, an intermediate step in ubiquinone biosynthesis. This Aeromonas hydrophila subsp. hydrophila (strain ATCC 7966 / DSM 30187 / BCRC 13018 / CCUG 14551 / JCM 1027 / KCTC 2358 / NCIMB 9240 / NCTC 8049) protein is 3-octaprenyl-4-hydroxybenzoate carboxy-lyase.